Consider the following 165-residue polypeptide: Trypsin alpha-3 (165 aa).

The 163-residue stretch at 1 to 163 (NSGGVLVSVA…LRSWVVSAAN (163 aa)) folds into the Peptidase S1 domain. Asp-26 (charge relay system) is an active-site residue. Disulfide bonds link Cys-89-Cys-106 and Cys-115-Cys-139. The active-site Charge relay system is the Ser-119.

This sequence belongs to the peptidase S1 family.

Its subcellular location is the secreted. The protein resides in the extracellular space. The enzyme catalyses Preferential cleavage: Arg-|-Xaa, Lys-|-Xaa.. The protein is Trypsin alpha-3 of Lucilia cuprina (Green bottle fly).